Consider the following 371-residue polypeptide: Mitogen-activated protein kinase homolog NTF6 (371 aa).

The Protein kinase domain occupies 38-324; that stretch reads IPPIQPVGRG…VEDALNHPFL (287 aa). Residues 44-52 and lysine 67 contribute to the ATP site; that span reads VGRGAYGMV. The active-site Proton acceptor is aspartate 164. The residue at position 196 (threonine 196) is a Phosphothreonine. The TXY signature appears at 196–198; that stretch reads TEY. Tyrosine 198 carries the phosphotyrosine modification.

The protein belongs to the protein kinase superfamily. CMGC Ser/Thr protein kinase family. MAP kinase subfamily. Mg(2+) is required as a cofactor. Dually phosphorylated on Thr-196 and Tyr-198, which activates the enzyme. Very low autophosphorylation, although dramatically increased when Mn(2+) is added to the reaction instead of Mg(2+).

It catalyses the reaction L-seryl-[protein] + ATP = O-phospho-L-seryl-[protein] + ADP + H(+). It carries out the reaction L-threonyl-[protein] + ATP = O-phospho-L-threonyl-[protein] + ADP + H(+). Its activity is regulated as follows. Activated by tyrosine and threonine phosphorylation. The sequence is that of Mitogen-activated protein kinase homolog NTF6 (NTF6) from Nicotiana tabacum (Common tobacco).